A 676-amino-acid polypeptide reads, in one-letter code: WD repeat-containing protein 48 (676 aa).

Tyrosine 28 is modified (phosphotyrosine). WD repeat units lie at residues 28 to 67 (YNRN…QDPY), 73 to 112 (HHTD…CMST), 115 to 154 (THKD…ALTA), 166 to 205 (GNKD…KLMK), 208 to 247 (GHTD…CIAT), 250 to 289 (VHDE…IRVL), 292 to 334 (EEKA…NFRA), and 358 to 397 (KGGA…KVED). At lysine 214 the chain carries N6-acetyllysine. Lysine 578 is modified (N6-acetyllysine). The disordered stretch occupies residues 607–628 (LDNESQTTSSSNNEKPEQEKEE). Positions 609–619 (NESQTTSSSNN) are enriched in low complexity. Threonine 613 is modified (phosphothreonine).

The protein belongs to the WD repeat WDR48 family. In terms of assembly, interacts with USP46. Interacts with USP1. Interacts with USP12. Component of the USP12-WDR20-WDR48 deubiquitinating complex. Component of the USP12-DMWD-WDR48 deubiquitinating complex. Interacts with PHLPP1. Interacts with RAD51AP1; the interaction is direct and promotes formation of a trimeric complex with RAD51 via RAD51AP1. Interacts with ATAD5; the interaction regulates USP1-mediated PCNA deubiquitination. Interacts with RAD51; the interaction is enhanced under replication stress. Interacts with ITCH; the interaction is more efficient when both USP12 and WDR48/UAF1 are involved and may facilitate recruitment of the USP12 deubiquitinating complex to Notch.

The protein resides in the nucleus. It localises to the cytoplasm. It is found in the lysosome. Its subcellular location is the late endosome. Functionally, regulator of deubiquitinating complexes, which acts as a strong activator of USP1, USP12 and USP46. Enhances the USP1-mediated deubiquitination of FANCD2; USP1 being almost inactive by itself. Activates deubiquitination by increasing the catalytic turnover without increasing the affinity of deubiquitinating enzymes for the substrate. Also activates deubiquitinating activity of complexes containing USP12. Docks at the distal end of the USP12 fingers domain and induces a cascade of structural changes leading to the activation of the enzyme. Together with RAD51AP1, promotes DNA repair by stimulating RAD51-mediated homologous recombination. Binds single-stranded DNA (ssDNA) and double-stranded DNA (dsDNA). DNA-binding is required both for USP1-mediated deubiquitination of FANCD2 and stimulation of RAD51-mediated homologous recombination: both WDR48/UAF1 and RAD51AP1 have coordinated role in DNA-binding during these processes. Together with ATAD5 and by regulating USP1 activity, has a role in PCNA-mediated translesion synthesis (TLS) by deubiquitinating monoubiquitinated PCNA. Together with ATAD5, has a role in recruiting RAD51 to stalled forks during replication stress. This chain is WD repeat-containing protein 48 (Wdr48), found in Mus musculus (Mouse).